Reading from the N-terminus, the 189-residue chain is Apolipoprotein D (189 aa).

Residues M1–G20 form the signal peptide. Q21 is subject to Pyrrolidone carboxylic acid. Intrachain disulfides connect C28–C134 and C61–C185. N-linked (GlcNAc...) (complex) asparagine glycans are attached at residues N65 and N98.

This sequence belongs to the calycin superfamily. Lipocalin family. As to quaternary structure, homodimer. In plasma, also exists as a disulfide-linked heterodimer with APOA2. Post-translationally, N-glycosylated. N-glycan heterogeneity at Asn-65: Hex5HexNAc4 (major) and Hex6HexNAc5 (minor); at Asn-98: Hex5HexNAc4 (minor), dHex1Hex5HexNAc4 (major), dHex1Hex6HexNAc5 (minor) and dHex1Hex7HexNAc6 (minor). In terms of tissue distribution, expressed in liver, intestine, pancreas, kidney, placenta, adrenal, spleen, fetal brain tissue and tears.

It localises to the secreted. APOD occurs in the macromolecular complex with lecithin-cholesterol acyltransferase. It is probably involved in the transport and binding of bilin. Appears to be able to transport a variety of ligands in a number of different contexts. The sequence is that of Apolipoprotein D (APOD) from Homo sapiens (Human).